A 384-amino-acid chain; its full sequence is Galactokinase (384 aa).

35 to 38 (EHTD) is a substrate binding site. ATP is bound by residues serine 69 and 125-131 (GAGLSSS). The Mg(2+) site is built by serine 131 and glutamate 163. The Proton acceptor role is filled by aspartate 175. Substrate is bound at residue tyrosine 224.

This sequence belongs to the GHMP kinase family. GalK subfamily.

The protein resides in the cytoplasm. It carries out the reaction alpha-D-galactose + ATP = alpha-D-galactose 1-phosphate + ADP + H(+). It functions in the pathway carbohydrate metabolism; galactose metabolism. In terms of biological role, catalyzes the transfer of the gamma-phosphate of ATP to D-galactose to form alpha-D-galactose-1-phosphate (Gal-1-P). This chain is Galactokinase, found in Aliivibrio fischeri (strain MJ11) (Vibrio fischeri).